The primary structure comprises 468 residues: Alpha-2A adrenergic receptor (468 aa).

The Extracellular segment spans residues 1–48; it reads MFRQEQPLAEGSFAPMGSLQPDAGNASWNGTEAPGGGARATPYSLQVT. N-linked (GlcNAc...) asparagine glycosylation is found at Asn25 and Asn29. The helical transmembrane segment at 49–74 threads the bilayer; sequence LTLVCLAGLLMLFTVFGNVLVIIAVF. The Cytoplasmic portion of the chain corresponds to 75–85; sequence TSRALKAPQNL. The chain crosses the membrane as a helical span at residues 86 to 111; that stretch reads FLVSLASADILVATLVIPFSLANEVM. Residues 112-121 lie on the Extracellular side of the membrane; that stretch reads GYWYFGKAWC. Cys121 and Cys203 form a disulfide bridge. Residues 122–144 form a helical membrane-spanning segment; that stretch reads EIYLALDVLFCTSSIVHLCAISL. Topologically, residues 145–164 are cytoplasmic; sequence DRYWSITQAIEYNLKRTPRR. A helical transmembrane segment spans residues 165–188; sequence IKAIIVTVWVISAVISFPPLISFE. The Extracellular segment spans residues 189–207; sequence KKRGRSGQPSAEPRCEIND. The helical transmembrane segment at 208-232 threads the bilayer; the sequence is QKWYVISSSIGSFFAPCLIMILVYV. Over 233 to 392 the chain is Cytoplasmic; that stretch reads RIYQIAKRRT…RQNREKRFTF (160 aa). 2 disordered regions span residues 242-279 and 291-381; these read TRVP…VGPV and NGAP…SRWR. A compositionally biased stretch (basic and acidic residues) spans 315 to 332; that stretch reads SSEHAERPPGSRRSERGP. Ser348 carries the phosphoserine modification. Residues 351 to 366 are compositionally biased toward low complexity; sequence RRGPGATGLGAPTAGP. Arg370 is modified (omega-N-methylarginine). Residues 393 to 417 form a helical membrane-spanning segment; sequence VLAVVIGVFVVCWFPFFFTYTLTAI. Residues 418–427 are Extracellular-facing; sequence GCPVPPTLFK. The chain crosses the membrane as a helical span at residues 428-448; that stretch reads FFFWFGYCNSSLNPVIYTIFN. The Cytoplasmic portion of the chain corresponds to 449–468; sequence HDFRRAFKKILCRGDRKRIV. Cys460 is lipidated: S-palmitoyl cysteine.

It belongs to the G-protein coupled receptor 1 family. Adrenergic receptor subfamily. ADRA2A sub-subfamily. As to quaternary structure, component of the ADA2A-containing complex (ATAC), composed of KAT14, KAT2A, TADA2L, TADA3L, ZZ3, MBIP, WDR5, YEATS2, CCDC101 and DR1. Retina, brain and olfactory lobe.

The protein localises to the cell membrane. Functionally, alpha-2 adrenergic receptors mediate the catecholamine-induced inhibition of adenylate cyclase through the action of G proteins. Component of the ATAC complex, a complex with histone acetyltransferase activity on histones H3 and H4. The polypeptide is Alpha-2A adrenergic receptor (Bos taurus (Bovine)).